Consider the following 601-residue polypeptide: Potassium voltage-gated channel subfamily A member 5 (601 aa).

Positions 1 to 200 (MEIALVPLEN…FYQLGDEAME (200 aa)) are tetramerization domain. Residues 1-236 (MEIALVPLEN…LIFEYPESSG (236 aa)) lie on the Cytoplasmic side of the membrane. The segment at 19–93 (GGEAGTGCSQ…DEEGEGDPAL (75 aa)) is disordered. A compositionally biased stretch (pro residues) spans 65 to 74 (RPLPPLPQDP). Lysine 210 participates in a covalent cross-link: Glycyl lysine isopeptide (Lys-Gly) (interchain with G-Cter in SUMO). A helical transmembrane segment spans residues 237–258 (SARGIAIVSVLVILISIITFCL). The Extracellular segment spans residues 259–312 (ETLPEFRDERELLRHPPVPHQPLGPSRGANGSGPLAPPSGPTVAPLLPRTLADP). Residues 275–297 (PVPHQPLGPSRGANGSGPLAPPS) form a disordered region. N-linked (GlcNAc...) asparagine glycosylation is present at asparagine 288. Residues 313-334 (FFIVETTCVIWFTFELLVRFFA) form a helical membrane-spanning segment. Cysteine 335 carries S-palmitoyl cysteine lipidation. The Cytoplasmic portion of the chain corresponds to 335–345 (CPSKAEFSRNI). Residues 346–366 (MNIIDVVAIFPYFITLGTELA) form a helical membrane-spanning segment. The Extracellular portion of the chain corresponds to 367–383 (EQPGGGGGGQNGQQAMS). Residues 384–404 (LAILRVIRLVRVFRIFKLSRH) form a helical; Voltage-sensor membrane-spanning segment. Residues 405–419 (SKGLQILGKTLQASM) are Cytoplasmic-facing. The S4-S5 linker stretch occupies residues 406-419 (KGLQILGKTLQASM). A helical membrane pass occupies residues 420–441 (RELGLLIFFLFIGVILFSSAVY). Residues 442–455 (FAEADNQETHFSSI) lie on the Extracellular side of the membrane. Residues 456-467 (PDAFWWAVVTMT) constitute an intramembrane region (helical). The short motif at 468-473 (TVGYGD) is the Selectivity filter element. Residues 468-475 (TVGYGDMR) lie within the membrane without spanning it. Topologically, residues 476 to 482 (PVTVGGK) are extracellular. A helical membrane pass occupies residues 483 to 511 (IVGSLCAIAGVLTIALPVPVIVSNFNYFY). The Cytoplasmic portion of the chain corresponds to 512 to 601 (HRETDHEEQA…CLDTSRETDL (90 aa)). Positions 521–545 (AALKEEQGSQSHGTGLDSGGPRKAS) are disordered. Lysine 524 participates in a covalent cross-link: Glycyl lysine isopeptide (Lys-Gly) (interchain with G-Cter in SUMO). Positions 599-601 (TDL) match the PDZ-binding motif.

Belongs to the potassium channel family. A (Shaker) (TC 1.A.1.2) subfamily. Kv1.5/KCNA5 sub-subfamily. In terms of assembly, homotetramer and heterotetramer of potassium channel proteins. Interacts with DLG1, which enhances channel currents. Forms a ternary complex with DLG1 and CAV3. Interacts with KCNAB1. Interacts with UBE2I. Interacts with XIRP2; the interaction is required for normal action potential configuration in the heart. Glycosylated. In terms of processing, sumoylated on Lys-210, and Lys-524, preferentially with SUMO3. Sumoylation regulates the voltage sensitivity of the channel.

It localises to the cell membrane. It carries out the reaction K(+)(in) = K(+)(out). In terms of biological role, voltage-gated potassium channel that mediates transmembrane potassium transport in excitable membranes. Forms tetrameric potassium-selective channels through which potassium ions pass in accordance with their electrochemical gradient. The channel alternates between opened and closed conformations in response to the voltage difference across the membrane. Can form functional homotetrameric channels and heterotetrameric channels that contain variable proportions of KCNA1, KCNA2, KCNA4, KCNA5, and possibly other family members as well; channel properties depend on the type of alpha subunits that are part of the channel. Channel properties are modulated by cytoplasmic beta subunits that regulate the subcellular location of the alpha subunits and promote rapid inactivation. Homotetrameric channels display rapid activation and slow inactivation. Required for normal electrical conduction including formation of the infranodal ventricular conduction system and normal action potential configuration, as a result of its interaction with XIRP2. May play a role in regulating the secretion of insulin in normal pancreatic islets. The sequence is that of Potassium voltage-gated channel subfamily A member 5 (KCNA5) from Mustela putorius furo (European domestic ferret).